Here is a 269-residue protein sequence, read N- to C-terminus: GTP cyclohydrolase FolE2 (269 aa).

It belongs to the GTP cyclohydrolase IV family.

The catalysed reaction is GTP + H2O = 7,8-dihydroneopterin 3'-triphosphate + formate + H(+). The protein operates within cofactor biosynthesis; 7,8-dihydroneopterin triphosphate biosynthesis; 7,8-dihydroneopterin triphosphate from GTP: step 1/1. Functionally, converts GTP to 7,8-dihydroneopterin triphosphate. The chain is GTP cyclohydrolase FolE2 from Burkholderia vietnamiensis (strain G4 / LMG 22486) (Burkholderia cepacia (strain R1808)).